An 86-amino-acid polypeptide reads, in one-letter code: Large ribosomal subunit protein eL43 (86 aa).

A C4-type zinc finger spans residues 38–60; it reads CPFCGHKGKVYRLSTGVWACKKC.

The protein belongs to the eukaryotic ribosomal protein eL43 family. Requires Zn(2+) as cofactor.

The protein is Large ribosomal subunit protein eL43 of Desulfurococcus amylolyticus (strain DSM 18924 / JCM 16383 / VKM B-2413 / 1221n) (Desulfurococcus kamchatkensis).